The chain runs to 116 residues: Aspartate 1-decarboxylase (116 aa).

Serine 25 (schiff-base intermediate with substrate; via pyruvic acid) is an active-site residue. The residue at position 25 (serine 25) is a Pyruvic acid (Ser). Threonine 57 contributes to the substrate binding site. The active-site Proton donor is the tyrosine 58. 73–75 (GAA) lines the substrate pocket.

The protein belongs to the PanD family. Heterooctamer of four alpha and four beta subunits. It depends on pyruvate as a cofactor. Is synthesized initially as an inactive proenzyme, which is activated by self-cleavage at a specific serine bond to produce a beta-subunit with a hydroxyl group at its C-terminus and an alpha-subunit with a pyruvoyl group at its N-terminus.

It is found in the cytoplasm. The catalysed reaction is L-aspartate + H(+) = beta-alanine + CO2. It functions in the pathway cofactor biosynthesis; (R)-pantothenate biosynthesis; beta-alanine from L-aspartate: step 1/1. Its function is as follows. Catalyzes the pyruvoyl-dependent decarboxylation of aspartate to produce beta-alanine. This is Aspartate 1-decarboxylase from Leptospira interrogans serogroup Icterohaemorrhagiae serovar Lai (strain 56601).